The following is a 3083-amino-acid chain: Laminin subunit alpha-1 (3083 aa).

The first 24 residues, 1 to 24, serve as a signal peptide directing secretion; that stretch reads MRGSGTGAALLVLLASVLWVTVRS. Residue Q25 is modified to Pyrrolidone carboxylic acid. The Laminin N-terminal domain maps to 25-276; it reads QQRGLFPAIL…SIKDISVGGM (252 aa). 6 disulfides stabilise this stretch: C277-C286, C279-C297, C299-C308, C311-C331, C334-C343, and C336-C368. 4 consecutive Laminin EGF-like domains span residues 277–333, 334–403, 404–460, and 461–509; these read CICY…ECEE, CNCH…PCRP, CNCD…NCIP, and CDCR…GCSE. N370 carries an N-linked (GlcNAc...) asparagine glycan. Cystine bridges form between C371–C380, C383–C401, C404–C416, C406–C434, C436–C445, C448–C458, C461–C474, C463–C478, C480–C489, and C492–C507. Residues 510–519 form the Laminin EGF-like 5; first part domain; it reads CFCFGVSGVC. Positions 523–715 constitute a Laminin IV type A 1 domain; sequence TWSISQVTNM…DLAVAADVEH (193 aa). The N-linked (GlcNAc...) asparagine glycan is linked to N672. The Laminin EGF-like 5; second part domain occupies 716-748; the sequence is CECPQGYTGTSCEACLPGYYRVDGILFGGICQP. Intrachain disulfides connect C749–C758, C751–C764, C767–C776, C779–C795, C798–C813, C800–C823, C826–C835, C838–C853, C856–C870, C858–C877, C880–C889, C892–C906, C909–C921, C911–C928, C930–C939, C942–C955, C958–C970, C960–C976, C978–C987, C990–C1002, C1005–C1014, C1007–C1021, C1023–C1032, C1035–C1048, C1051–C1063, C1053–C1070, C1072–C1081, C1084–C1094, C1097–C1109, C1099–C1125, C1127–C1136, and C1139–C1154. Laminin EGF-like domains follow at residues 749–797, 798–855, 856–908, 909–957, 958–1004, 1005–1050, 1051–1096, and 1097–1156; these read CECH…DCQP, CACP…TCVP, CNCS…NCRA, CDCH…GCVP, CNCS…GCTP, CDCA…GCQA, CNCS…DCVP, and CGCD…GCSP. A Cell attachment site motif is present at residues 1147-1149; that stretch reads RGD. Residues 1157 to 1166 enclose the Laminin EGF-like 14; first part domain; that stretch reads CFCFGLSQLC. Residues 1177 to 1368 form the Laminin IV type A 2 domain; sequence ITLASDQPLL…EGEAALLLEL (192 aa). N1344 carries an N-linked (GlcNAc...) asparagine glycan. A Laminin EGF-like 14; second part domain is found at 1369–1409; the sequence is CVCPPGTAGHSCQDCAPGYYREKLPESGGRGPRPLLAPCVP. Disulfide bonds link C1410–C1419, C1412–C1426, C1429–C1438, C1441–C1456, C1459–C1473, C1461–C1483, C1486–C1495, C1498–C1513, C1516–C1528, C1518–C1535, C1537–C1546, and C1549–C1560. Laminin EGF-like domains are found at residues 1410–1458, 1459–1515, and 1516–1562; these read CNCN…DCTP, CTCP…SCQT, and CDCN…DCVS. A domain II and I region spans residues 1564–2123; the sequence is DDDCVGPLLN…SRARKQVASI (560 aa). A coiled-coil region spans residues 1617–1691; the sequence is AKKIRAEIQL…VATLNQTARK (75 aa). N-linked (GlcNAc...) asparagine glycans are attached at residues N1659, N1686, N1718, N1725, N1763, and N1811. The stretch at 1723–1809 forms a coiled coil; it reads QQNATLELKA…QEKKLRVQEE (87 aa). Residues 1868–1901 adopt a coiled-coil conformation; that stretch reads KRRARDLVHRAEQHASELQSRAGALDRDLENVRN. Residues N1935, N2026, N2045, and N2066 are each glycosylated (N-linked (GlcNAc...) asparagine). Laminin G-like domains are found at residues 2124–2304, 2312–2488, 2493–2679, 2721–2893, and 2898–3078; these read KVAV…CNGC, DSSF…RKGC, IQSV…LDTC, AHQF…VDRC, and QEGT…PHSC. C2278 and C2304 are disulfide-bonded. N-linked (GlcNAc...) asparagine glycosylation occurs at N2355. 2 disulfide bridges follow: C2464–C2488 and C2652–C2679. N2834 carries an N-linked (GlcNAc...) asparagine glycan. C2868 and C2893 are disulfide-bonded. An N-linked (GlcNAc...) asparagine glycan is attached at N2923. C3047 and C3078 are disulfide-bonded.

In terms of assembly, laminin is a complex glycoprotein, consisting of three different polypeptide chains (alpha, beta, gamma), which are bound to each other by disulfide bonds into a cross-shaped molecule comprising one long and three short arms with globules at each end. Alpha-1 is a subunit of laminin-1 (laminin-111 or EHS laminin) and laminin-3 (laminin-121 or S-laminin). Tyrosine phosphorylated by PKDCC/VLK.

The protein localises to the secreted. The protein resides in the extracellular space. It is found in the extracellular matrix. Its subcellular location is the basement membrane. Its function is as follows. Binding to cells via a high affinity receptor, laminin is thought to mediate the attachment, migration and organization of cells into tissues during embryonic development by interacting with other extracellular matrix components. This is Laminin subunit alpha-1 (Lama1) from Mus musculus (Mouse).